Here is a 3072-residue protein sequence, read N- to C-terminus: E1A-binding protein p400 (3072 aa).

The segment covering 1-22 has biased composition (polar residues); the sequence is MHHGSGPQNVQHQLQRSRSFTG. Disordered stretches follow at residues 1–55, 125–149, and 222–250; these read MHHG…SPGY, PMSQ…LQNV, and LSQP…TGLQ. Over residues 31-40 the composition is skewed to pro residues; the sequence is PNLPPSPAAP. Composition is skewed to low complexity over residues 41–53 and 125–136; these read FAPS…PQSP and PMSQQVQTQSPT. Phosphoserine occurs at positions 52 and 134. A phosphoserine mark is found at serine 315 and serine 321. Disordered regions lie at residues 485–519, 544–601, and 635–769; these read SLTG…KRPR, MPTV…ASVP, and APIP…SQDK. Positions 556–569 are enriched in low complexity; sequence QATQLTGQKQSQQQ. The segment covering 570–583 has biased composition (polar residues); sequence YDPSTGPPVQNAAS. The span at 586-599 shows a compositional bias: pro residues; it reads TPPPQLPARLPPAS. Composition is skewed to low complexity over residues 646-657, 668-682, and 695-710; these read PAPSSQPAQPAL, QTSQ…VAST, and SLPT…PVSG. Composition is skewed to polar residues over residues 724-741 and 754-765; these read NRPS…TSRS and SPAQNAASSQDG. 3 positions are modified to phosphoserine: serine 735, serine 741, and serine 754. Residues 798–870 enclose the HSA domain; sequence LPKLQEAPRP…EQSRLRRIAA (73 aa). Residues 914–928 are compositionally biased toward basic and acidic residues; that stretch reads ESRLKGFDTSPEHSL. Disordered stretches follow at residues 914–952 and 997–1024; these read ESRL…EDEE and FQWP…DRES. Threonine 922 bears the Phosphothreonine mark. 3 positions are modified to phosphoserine: serine 923, serine 927, and serine 940. Threonine 944 bears the Phosphothreonine mark. Residues 950–1364 are interactions with RUVBL1 and RUVBL2; sequence DEEETIEEEE…SVLSVLTRLQ (415 aa). 2 positions are modified to phosphoserine: serine 1009 and serine 1010. A Helicase ATP-binding domain is found at 1102 to 1267; sequence AKLYRKNLNG…WTMVHFLIPG (166 aa). An ATP-binding site is contributed by 1115–1122; sequence DEAGLGKT. A DEAD box-like motif is present at residues 1218–1221; that stretch reads DEMQ. The residue at position 1471 (lysine 1471) is an N6-acetyllysine. Residues 1473 to 1503 are disordered; it reads EGRTVAFPSTHPPRMANTNTSTATPQGQVRG. Residues 1488–1499 show a composition bias toward polar residues; that stretch reads ANTNTSTATPQG. Phosphoserine is present on residues serine 1646 and serine 1650. The Helicase C-terminal domain occupies 1815–1972; it reads KLEALAILLQ…GNDYSMAFLT (158 aa). Disordered regions lie at residues 2033 to 2062 and 2203 to 2227; these read AQRS…DEEP and KERK…GEAV. Over residues 2043–2053 the composition is skewed to low complexity; that stretch reads GSSSVAVSSDS. An N6-acetyllysine mark is found at lysine 2265 and lysine 2272. Residues 2276-2345 enclose the Myb-like domain; the sequence is EPAQDSPDWL…QCRNRYENVI (70 aa). The interaction with ZNF42 stretch occupies residues 2440-2699; the sequence is KEKKALADQQ…QQQQQQQQQT (260 aa). The tract at residues 2441-2534 is disordered; it reads EKKALADQQK…PQSKGQPTMT (94 aa). Low complexity-rich tracts occupy residues 2446–2455 and 2463–2478; these read ADQQKAQQPP and QQQQ…QQQQ. Pro residues predominate over residues 2479–2493; that stretch reads QPPPPPQQPPPPVPQ. Residues 2494–2526 are compositionally biased toward low complexity; sequence PQAASSQTPAGQPAVQPQPQPQVQTQPQPVQPQ. A Phosphoserine modification is found at serine 2614. 2 disordered regions span residues 2734–2790 and 3028–3072; these read QKMQ…TGTT and ASLQ…PPCQ. Residues 2739–2754 show a composition bias toward pro residues; it reads PPQPPPPQAQPGPPQQ. Residues 2755–2775 are compositionally biased toward low complexity; it reads PAQVQVQTPQPPQQQQSPQLT. The segment covering 3042–3053 has biased composition (polar residues); the sequence is PASSDSPSQQPK.

This sequence belongs to the SNF2/RAD54 helicase family. SWR1 subfamily. In terms of assembly, component of the NuA4 histone acetyltransferase complex which contains the catalytic subunit KAT5/TIP60 and the subunits EP400, TRRAP/PAF400, BRD8/SMAP, EPC1, DMAP1/DNMAP1, RUVBL1/TIP49, RUVBL2, ING3, actin, ACTL6A/BAF53A, MORF4L1/MRG15, MORF4L2/MRGX, MRGBP, YEATS4/GAS41, VPS72/YL1 and MEAF6. May also participate in the formation of NuA4 related complexes which lack the KAT5/TIP60 catalytic subunit, but which include the SWI/SNF related protein SRCAP. The NuA4 complex interacts with MYC. EP400 interacts with TRRAP, RUVBL1 and RUVBL2. Component of a SWR1-like complex. Interacts with ZNF42. Interacts with PHF5A. As to expression, expressed in brain, thymus, lung, liver, spleen, kidney, colon and bone marrow.

The protein resides in the nucleus. In terms of biological role, component of the NuA4 histone acetyltransferase complex which is involved in transcriptional activation of select genes principally by acetylation of nucleosomal histones H4 and H2A. This modification may both alter nucleosome - DNA interactions and promote interaction of the modified histones with other proteins which positively regulate transcription. May be required for transcriptional activation of E2F1 and MYC target genes during cellular proliferation. The NuA4 complex ATPase and helicase activities seem to be, at least in part, contributed by the association of RUVBL1 and RUVBL2 with EP400. Component of a SWR1-like complex that specifically mediates the removal of histone H2A.Z/H2AZ1 from the nucleosome. Regulates transcriptional activity of ZNF42. This is E1A-binding protein p400 (Ep400) from Mus musculus (Mouse).